A 499-amino-acid polypeptide reads, in one-letter code: Acetylcholine receptor subunit alpha-type acr-16 (499 aa).

Residues 1 to 19 form the signal peptide; it reads MSSVCALLLSCALFLVAHG. Topologically, residues 20-232 are extracellular; that stretch reads SLQERRLYED…LHMRRRTLYY (213 aa). 2 N-linked (GlcNAc...) asparagine glycosylation sites follow: Asn-43 and Asn-93. Cystine bridges form between Cys-147–Cys-161 and Cys-211–Cys-212. The next 3 helical transmembrane spans lie at 233 to 253, 261 to 281, and 289 to 309; these read GFNL…GFTL, ITLQ…VSEM, and VPLL…STVF. Residues 310–473 are Cytoplasmic-facing; the sequence is TVYVLNLHYR…WKFAAMVVDR (164 aa). Residues 474 to 494 traverse the membrane as a helical segment; that stretch reads LCLYVFTIFIIASTIGIFWSA. Residues 495 to 499 lie on the Extracellular side of the membrane; sequence PYLVA.

The protein belongs to the ligand-gated ion channel (TC 1.A.9) family. Acetylcholine receptor (TC 1.A.9.1) subfamily.

It is found in the postsynaptic cell membrane. The protein resides in the cell membrane. Its function is as follows. After binding acetylcholine, the AChR responds by an extensive change in conformation that affects all subunits and leads to opening of an ion-conducting channel across the plasma membrane. A subunit of the levamisole-insensitive nicotinic receptor. The sequence is that of Acetylcholine receptor subunit alpha-type acr-16 from Caenorhabditis briggsae.